The primary structure comprises 440 residues: Argininosuccinate lyase (440 aa).

This sequence belongs to the lyase 1 family. Argininosuccinate lyase subfamily.

The protein resides in the cytoplasm. The catalysed reaction is 2-(N(omega)-L-arginino)succinate = fumarate + L-arginine. It functions in the pathway amino-acid biosynthesis; L-arginine biosynthesis; L-arginine from L-ornithine and carbamoyl phosphate: step 3/3. In Clostridium botulinum (strain 657 / Type Ba4), this protein is Argininosuccinate lyase.